The chain runs to 317 residues: N-acetyl-gamma-glutamyl-phosphate reductase (317 aa).

The active site involves Cys-136.

It belongs to the NAGSA dehydrogenase family. Type 1 subfamily.

The protein resides in the cytoplasm. It catalyses the reaction N-acetyl-L-glutamate 5-semialdehyde + phosphate + NADP(+) = N-acetyl-L-glutamyl 5-phosphate + NADPH + H(+). It functions in the pathway amino-acid biosynthesis; L-arginine biosynthesis; N(2)-acetyl-L-ornithine from L-glutamate: step 3/4. Its function is as follows. Catalyzes the NADPH-dependent reduction of N-acetyl-5-glutamyl phosphate to yield N-acetyl-L-glutamate 5-semialdehyde. The polypeptide is N-acetyl-gamma-glutamyl-phosphate reductase (Stenotrophomonas maltophilia (strain R551-3)).